Here is a 288-residue protein sequence, read N- to C-terminus: Nucleotide-binding protein Pcar_1935 (288 aa).

G11 to T18 lines the ATP pocket. D62–N65 serves as a coordination point for GTP.

Belongs to the RapZ-like family.

Displays ATPase and GTPase activities. The chain is Nucleotide-binding protein Pcar_1935 from Syntrophotalea carbinolica (strain DSM 2380 / NBRC 103641 / GraBd1) (Pelobacter carbinolicus).